Reading from the N-terminus, the 282-residue chain is Formamidopyrimidine-DNA glycosylase (282 aa).

Proline 2 functions as the Schiff-base intermediate with DNA in the catalytic mechanism. Glutamate 3 acts as the Proton donor in catalysis. Lysine 60 serves as the catalytic Proton donor; for beta-elimination activity. 3 residues coordinate DNA: histidine 99, arginine 118, and arginine 163. The FPG-type zinc finger occupies 248 to 282 (WVYGRTGEPCRVCGTSIERLKLGGRSAHFCPRCQA). The Proton donor; for delta-elimination activity role is filled by arginine 272.

The protein belongs to the FPG family. Monomer. The cofactor is Zn(2+).

The catalysed reaction is Hydrolysis of DNA containing ring-opened 7-methylguanine residues, releasing 2,6-diamino-4-hydroxy-5-(N-methyl)formamidopyrimidine.. It carries out the reaction 2'-deoxyribonucleotide-(2'-deoxyribose 5'-phosphate)-2'-deoxyribonucleotide-DNA = a 3'-end 2'-deoxyribonucleotide-(2,3-dehydro-2,3-deoxyribose 5'-phosphate)-DNA + a 5'-end 5'-phospho-2'-deoxyribonucleoside-DNA + H(+). Functionally, involved in base excision repair of DNA damaged by oxidation or by mutagenic agents. Acts as a DNA glycosylase that recognizes and removes damaged bases. Has a preference for oxidized purines, such as 7,8-dihydro-8-oxoguanine (8-oxoG). Has AP (apurinic/apyrimidinic) lyase activity and introduces nicks in the DNA strand. Cleaves the DNA backbone by beta-delta elimination to generate a single-strand break at the site of the removed base with both 3'- and 5'-phosphates. In Rippkaea orientalis (strain PCC 8801 / RF-1) (Cyanothece sp. (strain PCC 8801)), this protein is Formamidopyrimidine-DNA glycosylase.